Reading from the N-terminus, the 870-residue chain is Valine--tRNA ligase (870 aa).

Positions 1 to 13 (MTSQTFTTSSATP) are enriched in polar residues. The segment at 1 to 21 (MTSQTFTTSSATPPTRGVVPD) is disordered. The 'HIGH' region signature appears at 63 to 73 (PTVSGHLHPGH). The disordered stretch occupies residues 479 to 505 (YDHPLLPDESALPVDPASQPPSGYQES). The 'KMSKS' region signature appears at 595-599 (KMSKS). Lys-598 is an ATP binding site.

The protein belongs to the class-I aminoacyl-tRNA synthetase family. ValS type 2 subfamily. In terms of assembly, monomer.

It is found in the cytoplasm. It carries out the reaction tRNA(Val) + L-valine + ATP = L-valyl-tRNA(Val) + AMP + diphosphate. In terms of biological role, catalyzes the attachment of valine to tRNA(Val). As ValRS can inadvertently accommodate and process structurally similar amino acids such as threonine, to avoid such errors, it has a 'posttransfer' editing activity that hydrolyzes mischarged Thr-tRNA(Val) in a tRNA-dependent manner. The polypeptide is Valine--tRNA ligase (Cutibacterium acnes (strain DSM 16379 / KPA171202) (Propionibacterium acnes)).